We begin with the raw amino-acid sequence, 660 residues long: Pro-secreted protein ORF2 (660 aa).

The first 23 residues, 1 to 23 (MRPRAVLLLLFVLLPMLPAPPAG), serve as a signal peptide directing secretion. 2 disordered regions span residues 19–43 (APPAGQPSGRRRGRRSGGAGGGFWG) and 64–125 (ADVV…VPDV). Positions 28-33 (RRRGRR) match the Nuclear localization signal motif. Low complexity predominate over residues 93–124 (RPSAAPRRRSAPAGAAPLTAVSPAPDTAPVPD). Asparagine 137 and asparagine 310 each carry an N-linked (GlcNAc...) asparagine; by host glycan. A particle formation region spans residues 368–394 (IALTLFNLADTLLGGLPTELISSAGGQ). The N-linked (GlcNAc...) asparagine; by host glycan is linked to asparagine 562. Residues 585–610 (TTSLGAGPTSISAVGVLAPHSALAVL) are oligomerization.

Belongs to the hepevirus capsid protein family. In terms of assembly, homodimer. Self-assembles to form the capsid. The capsid is dominated by dimers that define the 30 morphological units. Interacts with phosphorylated protein ORF3. Interacts with host TMEM134. Interacts with host ASGR1 and ASGR2; these interactions facilitate infection of host hepatocytes. Post-translationally, cleaved by host protease in the N-terminus. N-glycosylated. In terms of processing, not N-glycosylated. The C-terminus of the capsid protein ORF2 is truncated in non-enveloped virions shedded in feces, probably due to host proteases.

It is found in the secreted. The protein resides in the virion. The protein localises to the host cytoplasm. It localises to the host endoplasmic reticulum. Its subcellular location is the host Golgi apparatus. It is found in the host cell surface. The protein resides in the host nucleus. Its function is as follows. Plays a role in the inhibition of host antibody-mediated neutralization without blocking viral cell entry. Forms an icosahedral capsid with a T=1 symmetry and a 34 nm diameter. The capsid is composed of 60 copies linked to each other. Binds to the 5' end of the genomic RNA to mediate genome encapsidation. Binds to heparin surface proteoglycans (HSPGs) to mediate viral entry. Additionally, the interactions with host ASGR1 and ASGR2 facilitate viral infection of hepatocytes. Inhibits IFN production by blocking host TBK1-induced IRF3 phosphorylation. The nuclear form probably modulates host gene expression. The chain is Pro-secreted protein ORF2 from Hepatitis E virus genotype 3 (isolate Human/United States/US2) (HEV-3).